A 486-amino-acid chain; its full sequence is 3-sulfolactaldehyde dehydrogenase (486 aa).

NADP(+)-binding positions include 157–158, 181–184, and 234–235; these read WN, RPAS, and GS. Catalysis depends on Glu-256, which acts as the Proton acceptor. Leu-257 is an NADP(+) binding site. Cys-290 (nucleophile) is an active-site residue. Residue Glu-387 coordinates NADP(+).

Belongs to the aldehyde dehydrogenase family.

It carries out the reaction (2S)-3-sulfolactaldehyde + NADP(+) + H2O = (2S)-3-sulfolactate + NADPH + 2 H(+). The catalysed reaction is (2S)-3-sulfolactaldehyde + NAD(+) + H2O = (2S)-3-sulfolactate + NADH + 2 H(+). In terms of biological role, catalyzes the oxidation of (2S)-3-sulfolactaldehyde to (2S)-3-sulfolactate, using both NAD(+) and NADP(+) as electron acceptors. Is involved in a degradation pathway of sulfoquinovose (SQ) that allows P.putida SQ1 to use SQ as the sole carbon and energy source for growth. This is 3-sulfolactaldehyde dehydrogenase from Pseudomonas putida (Arthrobacter siderocapsulatus).